A 374-amino-acid chain; its full sequence is Methionine import ATP-binding protein MetN 2 (374 aa).

In terms of domain architecture, ABC transporter spans 32–271 (VRFVGLGKTY…PQHEVSQTLL (240 aa)). 68–75 (GRSGAGKS) serves as a coordination point for ATP.

It belongs to the ABC transporter superfamily. Methionine importer (TC 3.A.1.24) family. As to quaternary structure, the complex is composed of two ATP-binding proteins (MetN), two transmembrane proteins (MetI) and a solute-binding protein (MetQ).

The protein resides in the cell inner membrane. It carries out the reaction L-methionine(out) + ATP + H2O = L-methionine(in) + ADP + phosphate + H(+). The enzyme catalyses D-methionine(out) + ATP + H2O = D-methionine(in) + ADP + phosphate + H(+). Its function is as follows. Part of the ABC transporter complex MetNIQ involved in methionine import. Responsible for energy coupling to the transport system. This chain is Methionine import ATP-binding protein MetN 2, found in Pseudomonas fluorescens (strain Pf0-1).